A 611-amino-acid polypeptide reads, in one-letter code: Broad-specificity linear acyl-CoA dehydrogenase FadE5 (611 aa).

FAD is bound by residues 162–165 (MVLT), S171, and T198. A 2,3-saturated acyl-CoA is bound at residue S171. Residues 224–225 (TK) and R301 contribute to the a 2,3-saturated acyl-CoA site. R326 contacts FAD. An a 2,3-saturated acyl-CoA-binding site is contributed by K338. 420–424 (QTLGG) serves as a coordination point for FAD. E447 contacts a 2,3-saturated acyl-CoA. Residue E447 is the Proton acceptor of the active site. FAD is bound at residue T449. Residues D456 and 460 to 461 (RK) each bind a 2,3-saturated acyl-CoA.

Belongs to the acyl-CoA dehydrogenase family. Homodimer. The cofactor is FAD.

The catalysed reaction is a long-chain 2,3-saturated fatty acyl-CoA + oxidized [electron-transfer flavoprotein] + H(+) = a long-chain (2E)-enoyl-CoA + reduced [electron-transfer flavoprotein]. It carries out the reaction a medium-chain 2,3-saturated fatty acyl-CoA + oxidized [electron-transfer flavoprotein] + H(+) = a medium-chain (2E)-enoyl-CoA + reduced [electron-transfer flavoprotein]. It catalyses the reaction a short-chain 2,3-saturated fatty acyl-CoA + oxidized [electron-transfer flavoprotein] + H(+) = a short-chain (2E)-enoyl-CoA + reduced [electron-transfer flavoprotein]. The enzyme catalyses octadecanoyl-CoA + oxidized [electron-transfer flavoprotein] + H(+) = (2E)-octadecenoyl-CoA + reduced [electron-transfer flavoprotein]. The catalysed reaction is oxidized [electron-transfer flavoprotein] + hexadecanoyl-CoA + H(+) = (2E)-hexadecenoyl-CoA + reduced [electron-transfer flavoprotein]. It carries out the reaction dodecanoyl-CoA + oxidized [electron-transfer flavoprotein] + H(+) = (2E)-dodecenoyl-CoA + reduced [electron-transfer flavoprotein]. It catalyses the reaction decanoyl-CoA + oxidized [electron-transfer flavoprotein] + H(+) = (2E)-decenoyl-CoA + reduced [electron-transfer flavoprotein]. The enzyme catalyses hexanoyl-CoA + oxidized [electron-transfer flavoprotein] + H(+) = (2E)-hexenoyl-CoA + reduced [electron-transfer flavoprotein]. The catalysed reaction is butanoyl-CoA + oxidized [electron-transfer flavoprotein] + H(+) = (2E)-butenoyl-CoA + reduced [electron-transfer flavoprotein]. It participates in lipid metabolism; fatty acid metabolism. In terms of biological role, acyl-CoA dehydrogenase that exhibits broad specificity for linear acyl-CoA substrates, with a preference for long-chain substrates. This chain is Broad-specificity linear acyl-CoA dehydrogenase FadE5, found in Mycobacterium tuberculosis (strain ATCC 25618 / H37Rv).